Consider the following 221-residue polypeptide: Transcription factor bHLH126 (221 aa).

2 disordered regions span residues 1-46 (MDPY…KKLL) and 104-132 (RRDE…VGKS). In terms of domain architecture, bHLH spans 42–94 (KKKLLHRDIERQRRQEMATLFATLRTHLPLKYIKGKRAVSDHVNGAVNFIKDT).

In terms of assembly, homodimer.

The protein resides in the nucleus. This chain is Transcription factor bHLH126 (BHLH126), found in Arabidopsis thaliana (Mouse-ear cress).